The sequence spans 197 residues: Casparian strip membrane protein 4 (197 aa).

Topologically, residues 1-34 (MMSSTTIDVPAESSNVAKGKAVLVAAPRPGGWKK) are cytoplasmic. A helical transmembrane segment spans residues 35–55 (GIAIVDFVLRLGAVAAALGAA). Topologically, residues 56–85 (TTMATADQTLPFFTQFFQFEASYDSFTTFQ) are extracellular. A helical transmembrane segment spans residues 86–106 (FFVITMALVGCYLVLSLPLSI). Residues 107-118 (VSIIRPHALGPK) are Cytoplasmic-facing. The helical transmembrane segment at 119 to 139 (LFLIILDTVFLTLATASAASA) threads the bilayer. Residues 140 to 171 (AAVVYVAHNGNQDSNWLAICNQFGDFCAQTSG) are Extracellular-facing. The chain crosses the membrane as a helical span at residues 172 to 192 (AVVSSLVAVVVFVLLIVMSAL). Topologically, residues 193-197 (ALGKH) are cytoplasmic.

This sequence belongs to the Casparian strip membrane proteins (CASP) family. As to quaternary structure, homodimer and heterodimers.

It is found in the cell membrane. Regulates membrane-cell wall junctions and localized cell wall deposition. Required for establishment of the Casparian strip membrane domain (CSD) and the subsequent formation of Casparian strips, a cell wall modification of the root endodermis that determines an apoplastic barrier between the intraorganismal apoplasm and the extraorganismal apoplasm and prevents lateral diffusion. The chain is Casparian strip membrane protein 4 from Lotus japonicus (Lotus corniculatus var. japonicus).